The primary structure comprises 183 residues: Extracellular superoxide dismutase [Cu-Zn] (183 aa).

A signal peptide spans 1-32 (MTMLQQILLISVIIGTVHVHEVDCANEVLKAR). Asn-63 carries an N-linked (GlcNAc...) asparagine glycan. The Cu cation site is built by His-77, His-79, and His-94. Cys-88 and Cys-177 are disulfide-bonded. 4 residues coordinate Zn(2+): His-94, His-102, His-111, and Asp-114. His-151 contacts Cu cation.

The protein belongs to the Cu-Zn superoxide dismutase family. Cu cation serves as cofactor. Requires Zn(2+) as cofactor.

It localises to the secreted. The protein resides in the extracellular space. It carries out the reaction 2 superoxide + 2 H(+) = H2O2 + O2. Destroys radicals which are normally produced within the cells and which are toxic to biological systems. The sequence is that of Extracellular superoxide dismutase [Cu-Zn] (SOD) from Haemonchus contortus (Barber pole worm).